Reading from the N-terminus, the 221-residue chain is Enolase-phosphatase E1 (221 aa).

Belongs to the HAD-like hydrolase superfamily. MasA/MtnC family. As to quaternary structure, monomer. Requires Mg(2+) as cofactor.

The enzyme catalyses 5-methylsulfanyl-2,3-dioxopentyl phosphate + H2O = 1,2-dihydroxy-5-(methylsulfanyl)pent-1-en-3-one + phosphate. It participates in amino-acid biosynthesis; L-methionine biosynthesis via salvage pathway; L-methionine from S-methyl-5-thio-alpha-D-ribose 1-phosphate: step 3/6. It functions in the pathway amino-acid biosynthesis; L-methionine biosynthesis via salvage pathway; L-methionine from S-methyl-5-thio-alpha-D-ribose 1-phosphate: step 4/6. In terms of biological role, bifunctional enzyme that catalyzes the enolization of 2,3-diketo-5-methylthiopentyl-1-phosphate (DK-MTP-1-P) into the intermediate 2-hydroxy-3-keto-5-methylthiopentenyl-1-phosphate (HK-MTPenyl-1-P), which is then dephosphorylated to form the acireductone 1,2-dihydroxy-3-keto-5-methylthiopentene (DHK-MTPene). This Xanthobacter autotrophicus (strain ATCC BAA-1158 / Py2) protein is Enolase-phosphatase E1.